The chain runs to 105 residues: Antitoxin HigA-1 (105 aa).

The 55-residue stretch at 15–69 folds into the HTH cro/C1-type domain; sequence LKVEFLEPMGITSKALAEAMGVHRNTVSNLINGGVLTAPVAIKLAAALGNTPEFW. The H-T-H motif DNA-binding region spans 27–46; sequence SKALAEAMGVHRNTVSNLIN.

Functionally, antitoxin component of a type II toxin-antitoxin (TA) system that counteracts the effect of the HigB-1 toxin. Binds to its own promoter and regulates transcription of the higB-1/higA-1 operon. The polypeptide is Antitoxin HigA-1 (higA-1) (Vibrio cholerae serotype O1 (strain ATCC 39315 / El Tor Inaba N16961)).